The chain runs to 348 residues: Phenylalanine--tRNA ligase alpha subunit (348 aa).

Glutamate 259 serves as a coordination point for Mg(2+).

Belongs to the class-II aminoacyl-tRNA synthetase family. Phe-tRNA synthetase alpha subunit type 1 subfamily. Tetramer of two alpha and two beta subunits. Mg(2+) is required as a cofactor.

It localises to the cytoplasm. The catalysed reaction is tRNA(Phe) + L-phenylalanine + ATP = L-phenylalanyl-tRNA(Phe) + AMP + diphosphate + H(+). The chain is Phenylalanine--tRNA ligase alpha subunit from Lacticaseibacillus casei (strain BL23) (Lactobacillus casei).